The following is an 809-amino-acid chain: Ribosome biogenesis protein ERB1 (809 aa).

Residues 1–107 are disordered; it reads MSKSSKVGMT…SDTRSITDAI (107 aa). Acidic residues-rich tracts occupy residues 30-70 and 77-97; these read AEVD…EDSD and LGEEEDPSDYDSENFSDEPQE. The interval 267–383 is required for interaction with NOP7; it reads RFVPSKHEAK…LRKVPGYQES (117 aa). The segment at 383–419 is required for interaction with YTM1; sequence SVRERFERCLDLYLAPRVRHNKLNIDPESLIPELPSP. WD repeat units follow at residues 435 to 474 and 483 to 523; these read GHTDKIRTISIDPQGLWLATGSDDGSVRIWEILTGRQVFN and NDED…FDIE. The disordered stretch occupies residues 545-569; sequence EEKFKNDEGNEDEDDEDDSATSTAV. Over residues 553-563 the composition is skewed to acidic residues; the sequence is GNEDEDDEDDS. WD repeat units follow at residues 593 to 635, 638 to 676, 679 to 718, 722 to 762, and 778 to 809; these read QCRK…SQSP, KSKGIIMDAKFHPFKPQLFVASQRQVRIYDLAQQVLVKK, PGVRLLSTIDIHPRGDNLLASSYDKRVLWHDLDLSATPYK, YHEK…DLMT, and VNSIGILDLIWHPKEAWLFSAGADGTARLWTT.

This sequence belongs to the WD repeat BOP1/ERB1 family. As to quaternary structure, component of the NOP7 complex, composed of ERB1, NOP7 and YTM1. The complex is held together by ERB1, which interacts with NOP7 via its N-terminal domain and with YTM1 via a high-affinity interaction between the seven-bladed beta-propeller domains of the 2 proteins. The NOP7 complex associates with the 66S pre-ribosome.

It localises to the nucleus. Its subcellular location is the nucleolus. It is found in the nucleoplasm. In terms of biological role, component of the NOP7 complex, which is required for maturation of the 25S and 5.8S ribosomal RNAs and formation of the 60S ribosome. This Scheffersomyces stipitis (strain ATCC 58785 / CBS 6054 / NBRC 10063 / NRRL Y-11545) (Yeast) protein is Ribosome biogenesis protein ERB1.